The primary structure comprises 487 residues: Citrate/succinate antiporter (487 aa).

14 helical membrane passes run 11–31, 60–80, 95–115, 138–158, 190–210, 214–234, 237–257, 288–308, 309–329, 345–365, 379–399, 401–421, 424–444, and 463–483; these read LLAP…DGMP, FIAV…AKEL, GLAG…IFAL, TLTL…FTPS, IGGY…SMFV, APNV…ISWL, FLCF…LSYV, WTLI…SEVI, NATA…VVPW, LATL…DWFA, ATVI…ASLS, HTAT…GVPM, LCIL…YATG, and LGAI…WPIL.

This sequence belongs to the SLC13A/DASS transporter (TC 2.A.47) family. DIT1 subfamily.

The protein resides in the cell inner membrane. Functionally, responsible for the uptake of citrate in exchange to the efflux of succinate. Has a relatively broad specificity for C(4)-dicarboxylates and tricarboxylates. The chain is Citrate/succinate antiporter (citT) from Escherichia coli O157:H7.